A 168-amino-acid chain; its full sequence is ATP synthase subunit b (168 aa).

A helical transmembrane segment spans residues 9 to 29; it reads AIPFGTIAYTLVVFLILLVML.

Belongs to the ATPase B chain family. In terms of assembly, F-type ATPases have 2 components, F(1) - the catalytic core - and F(0) - the membrane proton channel. F(1) has five subunits: alpha(3), beta(3), gamma(1), delta(1), epsilon(1). F(0) has three main subunits: a(1), b(2) and c(10-14). The alpha and beta chains form an alternating ring which encloses part of the gamma chain. F(1) is attached to F(0) by a central stalk formed by the gamma and epsilon chains, while a peripheral stalk is formed by the delta and b chains.

Its subcellular location is the cell membrane. In terms of biological role, f(1)F(0) ATP synthase produces ATP from ADP in the presence of a proton or sodium gradient. F-type ATPases consist of two structural domains, F(1) containing the extramembraneous catalytic core and F(0) containing the membrane proton channel, linked together by a central stalk and a peripheral stalk. During catalysis, ATP synthesis in the catalytic domain of F(1) is coupled via a rotary mechanism of the central stalk subunits to proton translocation. Component of the F(0) channel, it forms part of the peripheral stalk, linking F(1) to F(0). The sequence is that of ATP synthase subunit b from Bacillus cytotoxicus (strain DSM 22905 / CIP 110041 / 391-98 / NVH 391-98).